We begin with the raw amino-acid sequence, 348 residues long: Centromere protein L (348 aa).

The protein belongs to the CENP-L/IML3 family.

The protein localises to the nucleus. The protein resides in the chromosome. It localises to the centromere. In terms of biological role, probable component of a centromeric complex involved in assembly of kinetochore proteins, mitotic progression and chromosome segregation. The sequence is that of Centromere protein L (cenpl) from Xenopus tropicalis (Western clawed frog).